Reading from the N-terminus, the 269-residue chain is Chymotrypsin-like elastase family member 2B (269 aa).

The N-terminal stretch at 1 to 16 (MIRTLLLSTLVAGALS) is a signal peptide. A propeptide spans 17-28 (CGVSTYAPDMSR) (activation peptide). In terms of domain architecture, Peptidase S1 spans 29–267 (MLGGEEARPN…YNDWINSVIA (239 aa)). An intrachain disulfide couples Cys58 to Cys74. Catalysis depends on charge relay system residues His73 and Asp121. Disulfide bonds link Cys155–Cys222, Cys186–Cys202, and Cys212–Cys243. Residue Ser216 is the Charge relay system of the active site.

This sequence belongs to the peptidase S1 family. Elastase subfamily. As to expression, pancreas.

The protein localises to the secreted. It catalyses the reaction Preferential cleavage: Leu-|-Xaa, Met-|-Xaa and Phe-|-Xaa. Hydrolyzes elastin.. Functionally, acts upon elastin. This chain is Chymotrypsin-like elastase family member 2B (CELA2B), found in Homo sapiens (Human).